Consider the following 194-residue polypeptide: dITP/XTP pyrophosphatase (194 aa).

8–13 (TKNKGK) provides a ligand contact to substrate. Positions 41 and 70 each coordinate Mg(2+). Aspartate 70 acts as the Proton acceptor in catalysis. Substrate-binding positions include serine 71, 153–156 (FGYD), lysine 176, and 181–182 (HR).

This sequence belongs to the HAM1 NTPase family. As to quaternary structure, homodimer. Requires Mg(2+) as cofactor.

It catalyses the reaction XTP + H2O = XMP + diphosphate + H(+). The catalysed reaction is dITP + H2O = dIMP + diphosphate + H(+). The enzyme catalyses ITP + H2O = IMP + diphosphate + H(+). In terms of biological role, pyrophosphatase that catalyzes the hydrolysis of nucleoside triphosphates to their monophosphate derivatives, with a high preference for the non-canonical purine nucleotides XTP (xanthosine triphosphate), dITP (deoxyinosine triphosphate) and ITP. Seems to function as a house-cleaning enzyme that removes non-canonical purine nucleotides from the nucleotide pool, thus preventing their incorporation into DNA/RNA and avoiding chromosomal lesions. The sequence is that of dITP/XTP pyrophosphatase from Halalkalibacterium halodurans (strain ATCC BAA-125 / DSM 18197 / FERM 7344 / JCM 9153 / C-125) (Bacillus halodurans).